The chain runs to 258 residues: Acetylglutamate kinase (258 aa).

Residues 40–41 (GG), Arg-62, and Asn-158 each bind substrate.

The protein belongs to the acetylglutamate kinase family. ArgB subfamily.

It localises to the cytoplasm. The enzyme catalyses N-acetyl-L-glutamate + ATP = N-acetyl-L-glutamyl 5-phosphate + ADP. Its pathway is amino-acid biosynthesis; L-arginine biosynthesis; N(2)-acetyl-L-ornithine from L-glutamate: step 2/4. Its function is as follows. Catalyzes the ATP-dependent phosphorylation of N-acetyl-L-glutamate. This Azobacteroides pseudotrichonymphae genomovar. CFP2 protein is Acetylglutamate kinase.